A 158-amino-acid chain; its full sequence is Cyclic pyranopterin monophosphate synthase (158 aa).

Substrate-binding positions include 76–78 and 114–115; these read LCH and ME. The active site involves D129.

It belongs to the MoaC family. Homohexamer; trimer of dimers.

The enzyme catalyses (8S)-3',8-cyclo-7,8-dihydroguanosine 5'-triphosphate = cyclic pyranopterin phosphate + diphosphate. Its pathway is cofactor biosynthesis; molybdopterin biosynthesis. Its function is as follows. Catalyzes the conversion of (8S)-3',8-cyclo-7,8-dihydroguanosine 5'-triphosphate to cyclic pyranopterin monophosphate (cPMP). This is Cyclic pyranopterin monophosphate synthase from Shewanella baltica (strain OS155 / ATCC BAA-1091).